A 1029-amino-acid chain; its full sequence is Tyrosine-protein kinase-like otk (1029 aa).

A signal peptide spans 1–18 (MISIYGLVMALMMASVLA). At 19–577 (SSSRFQRVPQ…GGDGFLVTRA (559 aa)) the chain is on the extracellular side. Ig-like C2-type domains lie at 21-104 (SRFQ…REAS), 105-195 (PPAK…RVMS), 247-361 (PEDL…APIS), 364-459 (PGIL…VAIN), and 464-554 (PKFS…VQLV). A glycan (N-linked (GlcNAc...) asparagine) is linked at Asn-35. Disulfide bonds link Cys-42/Cys-91, Cys-133/Cys-184, Cys-272/Cys-350, and Cys-395/Cys-443. 7 N-linked (GlcNAc...) asparagine glycosylation sites follow: Asn-332, Asn-413, Asn-425, Asn-440, Asn-453, Asn-508, and Asn-520. Cysteines 486 and 538 form a disulfide. Residues 578-598 (VLITMTVALAYIVLVVGLMLW) form a helical membrane-spanning segment. At 599 to 1029 (CRYRRQARKA…LSKAMQIAEK (431 aa)) the chain is on the cytoplasmic side. 2 disordered regions span residues 613–675 (LSTK…KKSA) and 714–756 (SPSD…KTSM). Polar residues predominate over residues 651-669 (KSSGDAQKSDDTACSQQSR). Ser-674 carries the post-translational modification Phosphoserine. One can recognise a Protein kinase; inactive domain in the interval 688–1024 (LSELIQIGRG…QLGAALSKAM (337 aa)). Basic and acidic residues predominate over residues 716–727 (SDKDADTEKQHS).

The protein belongs to the protein kinase superfamily. Tyr protein kinase family. Insulin receptor subfamily. In terms of assembly, interacts with plexA; component of a receptor complex that mediates the repulsive signaling in response to Semaphorin ligands.

It localises to the cell membrane. Functionally, acts as a calcium-dependent, homophilic cell adhesion molecule that regulates neural recognition during the development of the nervous system. Component of the repulsive Plexin signaling response to regulate motor axon guidance at the embryonic stage. Also component of a receptor complex that is required in the adult visual system to innervate the lamina layer; specific targeting of R1-R6 axons. This is Tyrosine-protein kinase-like otk from Drosophila sechellia (Fruit fly).